The chain runs to 227 residues: Isopentenyl-diphosphate Delta-isomerase 1 (227 aa).

K36 serves as a coordination point for substrate. H40 and H51 together coordinate Mg(2+). Positions 49–199 (LLHRAFSVFL…EIKLTPWFKI (151 aa)) constitute a Nudix hydrolase domain. Substrate contacts are provided by R70 and K74. The active site involves C86. Substrate is bound at residue S87. Mg(2+) is bound by residues E146 and E148. Residue E148 is part of the active site. K176 carries the post-translational modification N6-acetyllysine. The Microbody targeting signal signature appears at 225–227 (HRL).

It belongs to the IPP isomerase type 1 family. In terms of assembly, monomer. It depends on Mg(2+) as a cofactor.

It localises to the peroxisome. The enzyme catalyses isopentenyl diphosphate = dimethylallyl diphosphate. It functions in the pathway isoprenoid biosynthesis; dimethylallyl diphosphate biosynthesis; dimethylallyl diphosphate from isopentenyl diphosphate: step 1/1. Its function is as follows. Catalyzes the 1,3-allylic rearrangement of the homoallylic substrate isopentenyl (IPP) to its highly electrophilic allylic isomer, dimethylallyl diphosphate (DMAPP). The sequence is that of Isopentenyl-diphosphate Delta-isomerase 1 (Idi1) from Mus musculus (Mouse).